The primary structure comprises 333 residues: Protein SEEDLING LETHAL 1, chloroplastic (333 aa).

Residues 1–55 (MQQEALSFLSSSLPSLHHNFPSLSRLRFNNFPALSFKPNTSSSSSSFFKSPDIPS) constitute a chloroplast transit peptide. The tract at residues 38-67 (PNTSSSSSSFFKSPDIPSLSSTTTTTTTTE) is disordered.

It belongs to the mTERF family. In terms of assembly, self-interacts. Associates with the plastid-encoded RNA polymerase (PEP) complex. Interacts directly with PTAC7/PAP12, PTAC12/HMR/PAP5 and PTAC14/PAP7. As to expression, expressed in green aerial tissues such as cotyledons, leaves, flowers and siliques, but not in roots.

Its subcellular location is the plastid. It localises to the chloroplast stroma. It is found in the chloroplast nucleoid. Its function is as follows. Transcription termination factor required for chloroplast gene expression and protein synthesis in chloroplasts. Necessary for chloroplast photosynthetic complexes assembly by modulating the accumulation of photosynthetic proteins. Essential for embryogenesis. The chain is Protein SEEDLING LETHAL 1, chloroplastic from Arabidopsis thaliana (Mouse-ear cress).